The following is a 381-amino-acid chain: Cytochrome b (381 aa).

The next 4 membrane-spanning stretches (helical) occupy residues F33–M53, W77–V98, W113–L133, and F178–L198. Heme b is bound by residues H83 and H97. H182 and H196 together coordinate heme b. Residue H201 coordinates a ubiquinone. A run of 4 helical transmembrane segments spans residues I226–S246, L288–H308, V320–G340, and F347–P367.

The protein belongs to the cytochrome b family. As to quaternary structure, the cytochrome bc1 complex contains 11 subunits: 3 respiratory subunits (MT-CYB, CYC1 and UQCRFS1), 2 core proteins (UQCRC1 and UQCRC2) and 6 low-molecular weight proteins (UQCRH/QCR6, UQCRB/QCR7, UQCRQ/QCR8, UQCR10/QCR9, UQCR11/QCR10 and a cleavage product of UQCRFS1). This cytochrome bc1 complex then forms a dimer. Heme b is required as a cofactor.

Its subcellular location is the mitochondrion inner membrane. Component of the ubiquinol-cytochrome c reductase complex (complex III or cytochrome b-c1 complex) that is part of the mitochondrial respiratory chain. The b-c1 complex mediates electron transfer from ubiquinol to cytochrome c. Contributes to the generation of a proton gradient across the mitochondrial membrane that is then used for ATP synthesis. This is Cytochrome b (MT-CYB) from Ningaui yvonnae (Southern ningaui).